Here is a 150-residue protein sequence, read N- to C-terminus: Large ribosomal subunit protein bL9 (150 aa).

It belongs to the bacterial ribosomal protein bL9 family.

Binds to the 23S rRNA. In Streptococcus pneumoniae (strain CGSP14), this protein is Large ribosomal subunit protein bL9.